A 717-amino-acid polypeptide reads, in one-letter code: Methylcrotonoyl-CoA carboxylase subunit alpha, mitochondrial (717 aa).

A mitochondrion-targeting transit peptide spans 1–38 (MAAAALLAAVDRNQLRRVPILLLQPREWAWKLRTMKYG). The 446-residue stretch at 45–490 (ITKVLIANRG…HTDFIPQHHK (446 aa)) folds into the Biotin carboxylation domain. Residue lysine 159 participates in ATP binding. The 198-residue stretch at 163 to 360 (KSIMAAAGVP…LVEWQLRIAA (198 aa)) folds into the ATP-grasp domain. 2 positions are modified to N6-acetyllysine: lysine 180 and lysine 193. ATP is bound by residues lysine 201 and 207 to 208 (GG). Lysine 233 is modified (N6-acetyllysine). ATP contacts are provided by histidine 251, histidine 278, and glutamate 318. Arginine 335 is a catalytic residue. At lysine 490 the chain carries N6-acetyllysine. Lysine 577 carries the N6-acetyllysine; alternate modification. At lysine 577 the chain carries N6-succinyllysine; alternate. The Biotinyl-binding domain maps to 622–711 (SIEVGIPVPK…NRHAPLVEFE (90 aa)). N6-biotinyllysine is present on lysine 677.

In terms of assembly, probably a dodecamer composed of six biotin-containing alpha subunits (MCCC1) and six beta (MCCC2) subunits. Interacts (via the biotin carboxylation domain) with SIRT4. Biotin is required as a cofactor. Acetylated.

The protein resides in the mitochondrion matrix. The catalysed reaction is 3-methylbut-2-enoyl-CoA + hydrogencarbonate + ATP = 3-methyl-(2E)-glutaconyl-CoA + ADP + phosphate + H(+). Its pathway is amino-acid degradation; L-leucine degradation; (S)-3-hydroxy-3-methylglutaryl-CoA from 3-isovaleryl-CoA: step 2/3. Biotin-attachment subunit of the 3-methylcrotonyl-CoA carboxylase, an enzyme that catalyzes the conversion of 3-methylcrotonyl-CoA to 3-methylglutaconyl-CoA, a critical step for leucine and isovaleric acid catabolism. The protein is Methylcrotonoyl-CoA carboxylase subunit alpha, mitochondrial (Mccc1) of Mus musculus (Mouse).